The following is a 182-amino-acid chain: Mesencephalic astrocyte-derived neurotrophic factor (182 aa).

The signal sequence occupies residues 1–24; that stretch reads MRRMWATQGLAVALALSVLPGSRA. Disulfide bonds link cysteine 30/cysteine 117, cysteine 33/cysteine 106, cysteine 64/cysteine 75, and cysteine 151/cysteine 154. Tyrosine 76 carries the phosphotyrosine modification. The interval 96–158 is interacts with ERN1, EIF2AK3 and ATF6; sequence LAHHIPVEKI…ETCKGCAEKS (63 aa). The interval 129–172 is interacts with HSPA5; the sequence is TVDLKKLRVKELKKILDDWGETCKGCAEKSDYIRKINELMPKYA.

The protein belongs to the ARMET family. In terms of assembly, interacts directly (via SAP domain) with HSPA5/BiP; the interaction inhibits ATP binding to HSPA5/BiP and subsequent nucleotide exchange. Component of a complex containing at least CRELD2, MANF, MATN3 and PDIA4. Interacts (via C-terminus) with ERN1 (via luminal domain); the interaction is decreased in the presence of increasing concentrations of Ca(2+). May contain sialic acid residues.

It localises to the secreted. Its subcellular location is the endoplasmic reticulum lumen. The protein localises to the sarcoplasmic reticulum lumen. Selectively promotes the survival of dopaminergic neurons of the ventral mid-brain. Modulates GABAergic transmission to the dopaminergic neurons of the substantia nigra. Enhances spontaneous, as well as evoked, GABAergic inhibitory postsynaptic currents in dopaminergic neurons. Inhibits cell proliferation and endoplasmic reticulum (ER) stress-induced cell death. Retained in the ER/sarcoplasmic reticulum (SR) through association with the endoplasmic reticulum chaperone protein HSPA5 under normal conditions. Stabilizes HSPA5/BiP in its substrate-bound ADP state, which facilitates HSPA5/BiP incorporation into chaperone-client complexes during endoplasmic reticulum stress, its interaction with HSPA5/BiP inhibits ATP binding to HSPA5/BiP and subsequent nucleotide exchange. As a result acts as a repressor of the unfolded protein response (UPR) pathway. Up-regulated and secreted by the ER/SR in response to ER stress and hypoxia. Following secretion by the ER/SR, directly binds to 3-O-sulfogalactosylceramide, a lipid sulfatide in the outer cell membrane of target cells. Sulfatide binding promotes its cellular uptake by endocytosis, and is required for its role in alleviating ER stress and cell toxicity under hypoxic and ER stress conditions. Essential for embryonic lung development. Required for the correct postnatal temporal and structural development of splenic white pulp. Required for the repair-associated myeloid response in skeletal muscle, acts as a regulator of phenotypic transition towards prorepair macrophages in response to muscle injury and as a result limits excessive proinflammatory signaling. Represses RELA expression and therefore NF-kB signaling in the myocardium, as a result limits macrophage infiltration of injured tissue and M1 macrophage differentiation in response to myocardial injury. Required for endochondral ossification in long bones and the skull during postnatal development. In Homo sapiens (Human), this protein is Mesencephalic astrocyte-derived neurotrophic factor.